The primary structure comprises 534 residues: Nitrate/nitrite transporter NrtP (534 aa).

A run of 12 helical transmembrane segments spans residues Trp19–Ile39, Thr52–Leu72, Leu79–Gln99, Leu109–Phe129, Ala150–Phe170, Ala195–Val215, Asp240–Trp260, Asn266–Phe286, Trp382–Thr404, Ile409–Ile431, Gly445–Leu465, and Gly485–Leu505.

The protein belongs to the major facilitator superfamily. Nitrate/nitrite porter (TC 2.A.1.8) family.

Its subcellular location is the cell inner membrane. High-efficiency transport system for both nitrate and nitrite. This is Nitrate/nitrite transporter NrtP from Picosynechococcus sp. (strain ATCC 27264 / PCC 7002 / PR-6) (Agmenellum quadruplicatum).